The chain runs to 404 residues: ATP phosphoribosyltransferase regulatory subunit (404 aa).

It belongs to the class-II aminoacyl-tRNA synthetase family. HisZ subfamily. In terms of assembly, heteromultimer composed of HisG and HisZ subunits.

The protein resides in the cytoplasm. It participates in amino-acid biosynthesis; L-histidine biosynthesis; L-histidine from 5-phospho-alpha-D-ribose 1-diphosphate: step 1/9. Required for the first step of histidine biosynthesis. May allow the feedback regulation of ATP phosphoribosyltransferase activity by histidine. The sequence is that of ATP phosphoribosyltransferase regulatory subunit from Picosynechococcus sp. (strain ATCC 27264 / PCC 7002 / PR-6) (Agmenellum quadruplicatum).